We begin with the raw amino-acid sequence, 111 residues long: Large ribosomal subunit protein uL23 (111 aa).

This sequence belongs to the universal ribosomal protein uL23 family. As to quaternary structure, part of the 50S ribosomal subunit. Contacts protein L29, and trigger factor when it is bound to the ribosome.

In terms of biological role, one of the early assembly proteins it binds 23S rRNA. One of the proteins that surrounds the polypeptide exit tunnel on the outside of the ribosome. Forms the main docking site for trigger factor binding to the ribosome. This chain is Large ribosomal subunit protein uL23, found in Chlamydia muridarum (strain MoPn / Nigg).